A 410-amino-acid chain; its full sequence is Proteasome-activating nucleotidase (410 aa).

Residues 1 to 70 (MENNSQNVLK…LRGEIERFRT (70 aa)) are a coiled coil. ATP is bound by residues 195 to 200 (GTGKTL) and His-334. Positions 408–410 (MFG) are docks into pockets in the proteasome alpha-ring to cause gate opening.

The protein belongs to the AAA ATPase family. As to quaternary structure, homohexamer. The hexameric complex has a two-ring architecture resembling a top hat that caps the 20S proteasome core at one or both ends. Upon ATP-binding, the C-terminus of PAN interacts with the alpha-rings of the proteasome core by binding to the intersubunit pockets.

Its subcellular location is the cytoplasm. In terms of biological role, ATPase which is responsible for recognizing, binding, unfolding and translocation of substrate proteins into the archaeal 20S proteasome core particle. Is essential for opening the gate of the 20S proteasome via an interaction with its C-terminus, thereby allowing substrate entry and access to the site of proteolysis. Thus, the C-termini of the proteasomal ATPase function like a 'key in a lock' to induce gate opening and therefore regulate proteolysis. Unfolding activity requires energy from ATP hydrolysis, whereas ATP binding alone promotes ATPase-20S proteasome association which triggers gate opening, and supports translocation of unfolded substrates. This chain is Proteasome-activating nucleotidase, found in Methanothermobacter thermautotrophicus (strain ATCC 29096 / DSM 1053 / JCM 10044 / NBRC 100330 / Delta H) (Methanobacterium thermoautotrophicum).